The sequence spans 115 residues: NADH-ubiquinone oxidoreductase chain 3 (115 aa).

3 helical membrane passes run 3-23, 55-75, and 84-104; these read LMIT…IAFW, FFLV…LLPL, and LNTM…SLAY.

The protein belongs to the complex I subunit 3 family. As to quaternary structure, core subunit of respiratory chain NADH dehydrogenase (Complex I) which is composed of 45 different subunits. Interacts with TMEM186. Interacts with TMEM242.

The protein localises to the mitochondrion inner membrane. The catalysed reaction is a ubiquinone + NADH + 5 H(+)(in) = a ubiquinol + NAD(+) + 4 H(+)(out). Its function is as follows. Core subunit of the mitochondrial membrane respiratory chain NADH dehydrogenase (Complex I) which catalyzes electron transfer from NADH through the respiratory chain, using ubiquinone as an electron acceptor. Essential for the catalytic activity of complex I. The chain is NADH-ubiquinone oxidoreductase chain 3 from Ovis aries (Sheep).